We begin with the raw amino-acid sequence, 129 residues long: Capsid protein (129 aa).

Positions 31–104 are viral RNA-binding; the sequence is EWISSNSRSQ…FATNSDCELI (74 aa).

Belongs to the Leviviricetes capsid protein family. As to quaternary structure, homodimer. The capsid proteins form dimers that assemble by group of 5. Twelve such pentamers are linked together with free dimers. The homodimers binds to the viral RNA via an operator hairpin, but also to many other RNA sequences in the viral genome; this interaction probably shifts the virus from the replicative to the assembly phase and ensures specific encapsidation of the viral genome.

Its subcellular location is the virion. Functionally, capsid protein self-assembles to form an icosahedral capsid with a T=3 symmetry, about 26 nm in diameter, and consisting of 89 capsid proteins dimers (178 capsid proteins). Involved in viral genome encapsidation through the interaction between a capsid protein dimer and the multiple packaging signals present in the RNA genome. The capsid also contains 1 copy of the A2 maturation protein. Its function is as follows. Acts as a translational repressor of viral replicase synthesis late in infection. This latter function is the result of capsid protein interaction with an RNA hairpin which contains the replicase ribosome-binding site. This chain is Capsid protein, found in Enterobacteria phage f2 (Bacteriophage f2).